A 242-amino-acid polypeptide reads, in one-letter code: MLTALVIDDEQFAREELAELLDETGQVEVVGDASNAILGLKKINELKPDVVFLDIQMPQVTGIELLGMLDPETMPYVVFVTAYDQYAIQAFEDNAFDYLLKPVDPCRLNKTVKRLNKVISQSALTQQLSAITPDTLDQIPCIGHNRIVIMATETVECAYSDISGVHVRSTSQTASTQLTLKTLEEKTPLVRCHRQYLVSIKAISEIKLLENGLAEIITKTGFEIPVSRRYLKVLKEMLGISH.

The 114-residue stretch at 3-116 (TALVIDDEQF…RLNKTVKRLN (114 aa)) folds into the Response regulatory domain. Asp-54 is subject to 4-aspartylphosphate. The region spanning 139-240 (IPCIGHNRIV…LKVLKEMLGI (102 aa)) is the HTH LytTR-type domain.

This is an uncharacterized protein from Vibrio parahaemolyticus serotype O3:K6 (strain RIMD 2210633).